Here is a 475-residue protein sequence, read N- to C-terminus: Ribulose bisphosphate carboxylase large chain (475 aa).

Positions methionine 1–serine 2 are excised as a propeptide. Proline 3 bears the N-acetylproline mark. At lysine 14 the chain carries N6,N6,N6-trimethyllysine. Substrate is bound by residues asparagine 123 and threonine 173. Lysine 175 (proton acceptor) is an active-site residue. Substrate is bound at residue lysine 177. Mg(2+)-binding residues include lysine 201, aspartate 203, and glutamate 204. The residue at position 201 (lysine 201) is an N6-carboxylysine. Histidine 294 acts as the Proton acceptor in catalysis. Positions 295, 327, and 379 each coordinate substrate.

The protein belongs to the RuBisCO large chain family. Type I subfamily. In terms of assembly, heterohexadecamer of 8 large chains and 8 small chains. It depends on Mg(2+) as a cofactor.

It is found in the plastid. Its subcellular location is the chloroplast. The enzyme catalyses 2 (2R)-3-phosphoglycerate + 2 H(+) = D-ribulose 1,5-bisphosphate + CO2 + H2O. It carries out the reaction D-ribulose 1,5-bisphosphate + O2 = 2-phosphoglycolate + (2R)-3-phosphoglycerate + 2 H(+). Functionally, ruBisCO catalyzes two reactions: the carboxylation of D-ribulose 1,5-bisphosphate, the primary event in carbon dioxide fixation, as well as the oxidative fragmentation of the pentose substrate in the photorespiration process. Both reactions occur simultaneously and in competition at the same active site. This Nymphaea alba (White water-lily) protein is Ribulose bisphosphate carboxylase large chain.